The following is a 122-amino-acid chain: MIQAQTYLNVADNSGARELMCIRIVGASNPRYAHIGDVIVAVIKEAVPNMPLERSEVIRAVIVRTCKELKRDNGIIIRYDDNAAVVIDPEGNPKGTRVFGSIAGELRHLNFTKIVSLAPEVF.

The protein belongs to the universal ribosomal protein uL14 family. In terms of assembly, part of the 50S ribosomal subunit.

Its subcellular location is the plastid. The protein resides in the chloroplast. Functionally, binds to 23S rRNA. The sequence is that of Large ribosomal subunit protein uL14c from Amborella trichopoda.